We begin with the raw amino-acid sequence, 194 residues long: Large ribosomal subunit protein eL15 (194 aa).

Positions 164–194 are disordered; sequence SAGKKGRGLRNKGIGAEKVRPSIRAHGRRGK. Over residues 184 to 194 the composition is skewed to basic residues; it reads PSIRAHGRRGK.

The protein belongs to the eukaryotic ribosomal protein eL15 family.

The polypeptide is Large ribosomal subunit protein eL15 (rpl15e) (Methanocaldococcus jannaschii (strain ATCC 43067 / DSM 2661 / JAL-1 / JCM 10045 / NBRC 100440) (Methanococcus jannaschii)).